A 239-amino-acid polypeptide reads, in one-letter code: Ribonuclease HII (239 aa).

Residues 30-221 (GPVAGVDEVG…VRRLVTAGTP (192 aa)) enclose the RNase H type-2 domain. The a divalent metal cation site is built by D36, E37, and D130.

Belongs to the RNase HII family. Mn(2+) is required as a cofactor. The cofactor is Mg(2+).

It is found in the cytoplasm. It carries out the reaction Endonucleolytic cleavage to 5'-phosphomonoester.. Endonuclease that specifically degrades the RNA of RNA-DNA hybrids. The chain is Ribonuclease HII from Mycobacterium sp. (strain KMS).